A 347-amino-acid polypeptide reads, in one-letter code: GMP reductase (347 aa).

Position 108–131 (108–131 (ADFEKTVQILALNPALNFVCIDVA)) interacts with NADP(+). K(+) is bound by residues G181 and G183. C186 acts as the Thioimidate intermediate in catalysis. 216 to 239 (IVSDGGCTMPGDVAKAFGGGADFV) is an NADP(+) binding site.

It belongs to the IMPDH/GMPR family. GuaC type 1 subfamily. As to quaternary structure, homotetramer.

It carries out the reaction IMP + NH4(+) + NADP(+) = GMP + NADPH + 2 H(+). In terms of biological role, catalyzes the irreversible NADPH-dependent deamination of GMP to IMP. It functions in the conversion of nucleobase, nucleoside and nucleotide derivatives of G to A nucleotides, and in maintaining the intracellular balance of A and G nucleotides. This chain is GMP reductase, found in Salmonella typhi.